Here is a 434-residue protein sequence, read N- to C-terminus: Methylenetetrahydrofolate--tRNA-(uracil-5-)-methyltransferase TrmFO (434 aa).

Residue 9-14 (GAGLAG) participates in FAD binding.

Belongs to the MnmG family. TrmFO subfamily. FAD is required as a cofactor.

It is found in the cytoplasm. It carries out the reaction uridine(54) in tRNA + (6R)-5,10-methylene-5,6,7,8-tetrahydrofolate + NADH + H(+) = 5-methyluridine(54) in tRNA + (6S)-5,6,7,8-tetrahydrofolate + NAD(+). It catalyses the reaction uridine(54) in tRNA + (6R)-5,10-methylene-5,6,7,8-tetrahydrofolate + NADPH + H(+) = 5-methyluridine(54) in tRNA + (6S)-5,6,7,8-tetrahydrofolate + NADP(+). In terms of biological role, catalyzes the folate-dependent formation of 5-methyl-uridine at position 54 (M-5-U54) in all tRNAs. In Listeria innocua serovar 6a (strain ATCC BAA-680 / CLIP 11262), this protein is Methylenetetrahydrofolate--tRNA-(uracil-5-)-methyltransferase TrmFO.